Consider the following 218-residue polypeptide: 25 kDa calcium-binding protein (218 aa).

EF-hand domains lie at 24 to 59, 66 to 101, 128 to 163, and 171 to 206; these read GAKTVARRIFENYDKGRKGRIENTDCVPMITEAYKS, PSSDDIKAYHRVLDRNGDGIVTYQDIEELCIRYLTG, AKLDVARRLFKRYDKDGSGQLQDDEIAGLLKDTYAE, and PTKEDVKIWLQMADTNSDGSVSLEEYEDLIIKSLQK. Residues aspartate 37, arginine 43, aspartate 48, aspartate 79, asparagine 81, aspartate 83, aspartate 90, aspartate 141, aspartate 143, serine 145, glutamine 147, glutamate 152, aspartate 184, asparagine 186, aspartate 188, serine 190, and glutamate 195 each coordinate Ca(2+).

Expected to play a crucial role in calcium-dependent regulation of ciliary movement. The polypeptide is 25 kDa calcium-binding protein (Tetrahymena thermophila).